Here is a 213-residue protein sequence, read N- to C-terminus: Peptidyl-prolyl cis-trans isomerase B (213 aa).

The N-terminal stretch at 1–23 (MAVLRVLCGLLLVSILFLGFVLS) is a signal peptide. The PPIase cyclophilin-type domain maps to 35–197 (FFDIEVDEQP…KSVKIANCGH (163 aa)). The Prevents secretion from ER motif lies at 210-213 (DAAE).

This sequence belongs to the cyclophilin-type PPIase family. PPIase B subfamily.

Its subcellular location is the endoplasmic reticulum lumen. It carries out the reaction [protein]-peptidylproline (omega=180) = [protein]-peptidylproline (omega=0). With respect to regulation, inhibited by cyclosporin A (CsA). Its function is as follows. PPIases accelerate the folding of proteins. It catalyzes the cis-trans isomerization of proline imidic peptide bonds in oligopeptides. In Schistosoma japonicum (Blood fluke), this protein is Peptidyl-prolyl cis-trans isomerase B.